Reading from the N-terminus, the 435-residue chain is NAD-specific glutamate dehydrogenase A (435 aa).

The disordered stretch occupies residues 1-28 (MTMASKSDSTHDESGDEAADSTEPESAL). Over residues 14–23 (SGDEAADSTE) the composition is skewed to acidic residues. The active site involves K126.

The protein belongs to the Glu/Leu/Phe/Val dehydrogenases family. In terms of assembly, homohexamer. In terms of processing, the N-terminus is blocked.

It carries out the reaction L-glutamate + NAD(+) + H2O = 2-oxoglutarate + NH4(+) + NADH + H(+). Inhibited by ethanol, acetone, acetonitrile and 2-propanol (65 to 70% inhibition) and to a lesser extent by methanol and dimethyl formamide (26 and 49 % inhibition respectively). No effect of glycerol or DMSO. The polypeptide is NAD-specific glutamate dehydrogenase A (gdhX) (Halobacterium salinarum (Halobacterium halobium)).